A 111-amino-acid chain; its full sequence is Estrogen receptor (111 aa).

A disordered region spans residues P1–E42. The interval P1–Y49 is modulating. Positions S19–L30 are enriched in basic and acidic residues. Residue S32 is modified to Phosphoserine. NR C4-type zinc fingers lie at residues C50–C70 and C86–C110. The segment at residues C50–Y111 is a DNA-binding region (nuclear receptor).

Belongs to the nuclear hormone receptor family. NR3 subfamily. As to quaternary structure, binds DNA as a homodimer. Can form a heterodimer with ESR2. Interacts with coactivator NCOA5. Interacts with PELP1, the interaction is enhanced by 17-beta-estradiol; the interaction increases ESR1 transcriptional activity. Interacts with NCOA7; the interaction is ligand-inducible. Interacts with AKAP13, CUEDC2, HEXIM1, KDM5A, MAP1S, SMARD1, and UBE1C. Interacts with MUC1; the interaction is stimulated by 7 beta-estradiol (E2) and enhances ESR1-mediated transcription. Interacts with DNTTIP2, and UIMC1. Interacts with KMT2D/MLL2. Interacts with ATAD2; the interaction is enhanced by estradiol. Interacts with KIF18A and LDB1. Interacts with RLIM (via its C-terminus). Interacts with MACROD1. Interacts with SH2D4A and PLCG. Interacts with SH2D4A; the interaction blocks binding to PLCG and inhibits estrogen-induced cell proliferation. Interacts with DYNLL1. Interacts with CCDC62; the interaction requires estradiol and appears to enhance the transcription of target genes. Interacts with NR2C1; the interaction prevents homodimerization of ESR1 and suppresses its transcriptional activity and cell growth. Interacts with DNAAF4. Interacts with PRMT2. Interacts with RBFOX2. Interacts with EP300; the interaction is estrogen-dependent and enhanced by CITED1. Interacts with CITED1; the interaction is estrogen-dependent. Interacts with FAM120B, FOXL2, PHB2 and SLC30A9. Interacts with coactivators NCOA3 and NCOA6. Interacts with STK3/MST2 only in the presence of SAV1 and vice-versa. Binds to CSNK1D. Interacts with NCOA2; NCOA2 can interact with ESR1 AF-1 and AF-2 domains simultaneously and mediate their transcriptional synergy. Interacts with DDX5. Interacts with NCOA1; the interaction seems to require a self-association of N-terminal and C-terminal regions. Interacts with ZNF366, DDX17, NFKB1, RELA, SP1 and SP3. Interacts with NRIP1. Interacts with GPER1; the interaction occurs in an estrogen-dependent manner. Interacts with CLOCK and the interaction is stimulated by estrogen. Interacts with TRIP4 (ufmylated); estrogen dependent. Interacts with LMTK3; the interaction phosphorylates ESR1 (in vitro) and protects it against proteasomal degradation. Interacts with CCAR2 (via N-terminus) in a ligand-independent manner. Interacts with ZFHX3. Interacts with SFR1 in a ligand-dependent and -independent manner. Interacts with DCAF13, LATS1 and DCAF1; regulates ESR1 ubiquitination and ubiquitin-mediated proteasomal degradation. Interacts (via DNA-binding domain) with POU4F2 (C-terminus); this interaction increases the estrogen receptor ESR1 transcriptional activity in a DNA- and ligand 17-beta-estradiol-independent manner. Interacts with ESRRB isoform 1. Interacts with UBE3A and WBP2. Interacts with GTF2B. Interacts with RBM39. In the absence of hormonal ligand, interacts with TACC1. Interacts with PI3KR1 or PI3KR2 and PTK2/FAK1. Interacts with SRC. Interacts with BAG1; the interaction is promoted in the absence of estradiol (17-beta-estradiol/E2). Interacts with and ubiquitinated by STUB1; the interaction is promoted in the absence of estradiol (17-beta-estradiol/E2). Interacts with NEDD8. Ubiquitinated; regulated by LATS1 via DCAF1 it leads to ESR1 proteasomal degradation. Deubiquitinated by OTUB1. Ubiquitinated by STUB1/CHIP; in the CA1 hippocampal region following loss of endogenous circulating estradiol (17-beta-estradiol/E2). Ubiquitinated by UBR5, leading to its degradation: UBR5 specifically recognizes and binds ligand-bound ESR1 when it is not associated with coactivators (NCOAs). In presence of NCOAs, the UBR5-degron is not accessible, preventing its ubiquitination and degradation. Post-translationally, dimethylated by PRMT1. Demethylated by JMJD6. In terms of processing, palmitoylated by ZDHHC7 and ZDHHC21. This modification is required for plasma membrane targeting and for rapid intracellular signaling via ERK and AKT kinases and cAMP generation, but not for signaling mediated by the nuclear hormone receptor. Phosphorylated by cyclin A/CDK2 and CK1. Phosphorylation probably enhances transcriptional activity. Dephosphorylation by PPP5C inhibits its transactivation activity. Phosphorylated by LMTK3 (in vitro).

It is found in the nucleus. Its subcellular location is the cytoplasm. It localises to the golgi apparatus. The protein resides in the cell membrane. Functionally, nuclear hormone receptor. The steroid hormones and their receptors are involved in the regulation of eukaryotic gene expression and affect cellular proliferation and differentiation in target tissues. Ligand-dependent nuclear transactivation involves either direct homodimer binding to a palindromic estrogen response element (ERE) sequence or association with other DNA-binding transcription factors, such as AP-1/c-Jun, c-Fos, ATF-2, Sp1 and Sp3, to mediate ERE-independent signaling. Ligand binding induces a conformational change allowing subsequent or combinatorial association with multiprotein coactivator complexes through LXXLL motifs of their respective components. Mutual transrepression occurs between the estrogen receptor (ER) and NF-kappa-B in a cell-type specific manner. Decreases NF-kappa-B DNA-binding activity and inhibits NF-kappa-B-mediated transcription from the IL6 promoter and displace RELA/p65 and associated coregulators from the promoter. Recruited to the NF-kappa-B response element of the CCL2 and IL8 promoters and can displace CREBBP. Present with NF-kappa-B components RELA/p65 and NFKB1/p50 on ERE sequences. Can also act synergistically with NF-kappa-B to activate transcription involving respective recruitment adjacent response elements; the function involves CREBBP. Can activate the transcriptional activity of TFF1. Also mediates membrane-initiated estrogen signaling involving various kinase cascades. Essential for MTA1-mediated transcriptional regulation of BRCA1 and BCAS3. Maintains neuronal survival in response to ischemic reperfusion injury when in the presence of circulating estradiol (17-beta-estradiol/E2). The protein is Estrogen receptor (ESR1) of Ovis aries (Sheep).